The primary structure comprises 763 residues: Xaa-Pro dipeptidyl-peptidase (763 aa).

Catalysis depends on charge relay system residues serine 348, aspartate 468, and histidine 498.

It belongs to the peptidase S15 family. Homodimer.

It is found in the cytoplasm. The catalysed reaction is Hydrolyzes Xaa-Pro-|- bonds to release unblocked, N-terminal dipeptides from substrates including Ala-Pro-|-p-nitroanilide and (sequentially) Tyr-Pro-|-Phe-Pro-|-Gly-Pro-|-Ile.. In terms of biological role, removes N-terminal dipeptides sequentially from polypeptides having unsubstituted N-termini provided that the penultimate residue is proline. The polypeptide is Xaa-Pro dipeptidyl-peptidase (pepX) (Lactococcus lactis subsp. cremoris (Streptococcus cremoris)).